We begin with the raw amino-acid sequence, 509 residues long: Solute carrier family 2, facilitated glucose transporter member 4 (509 aa).

At 1-24 (MPSGFQQIGSEDGEPPQQRVTGTL) the chain is on the cytoplasmic side. The segment at 7 to 13 (QIGSEDG) is interaction with SRFBP1. Residue Ser-10 is modified to Phosphoserine. A helical membrane pass occupies residues 25-45 (VLAVFSAVLGSLQFGYNIGVI). The Extracellular portion of the chain corresponds to 46–81 (NAPQKVIEQSYNETWLGRQGPEGPSSIPPGTLTTLW). N-linked (GlcNAc...) asparagine glycosylation occurs at Asn-57. A helical transmembrane segment spans residues 82 to 102 (ALSVAIFSVGGMISSFLIGII). Residues 103-111 (SQWLGRKRA) are Cytoplasmic-facing. The chain crosses the membrane as a helical span at residues 112-132 (MLVNNVLAVLGGSLMGLANAA). Topologically, residues 133–142 (ASYEMLILGR) are extracellular. The chain crosses the membrane as a helical span at residues 143-163 (FLIGAYSGLTSGLVPMYVGEI). Over 164 to 171 (APTHLRGA) the chain is Cytoplasmic. A helical transmembrane segment spans residues 172-192 (LGTLNQLAIVIGILIAQVLGL). Gln-177 lines the D-glucose pocket. The Extracellular segment spans residues 193 to 201 (ESLLGTASL). A helical transmembrane segment spans residues 202 to 222 (WPLLLGLTVLPALLQLVLLPF). Cys-223 is lipidated: S-palmitoyl cysteine. Topologically, residues 223 to 287 (CPESPRYLYI…LLGSRTHRQP (65 aa)) are cytoplasmic. Ser-274 carries the phosphoserine; by SGK1 modification. A helical transmembrane segment spans residues 288–308 (LIIAVVLQLSQQLSGINAVFY). Residues 298–299 (QQ) and Asn-304 contribute to the D-glucose site. Topologically, residues 309 to 323 (YSTSIFETAGVGQPA) are extracellular. The helical transmembrane segment at 324-344 (YATIGAGVVNTVFTLVSVLLV) threads the bilayer. Position 333 (Asn-333) interacts with D-glucose. Topologically, residues 345–353 (ERAGRRTLH) are cytoplasmic. The helical transmembrane segment at 354–374 (LLGLAGMCGCAILMTVALLLL) threads the bilayer. Over 375–384 (ERVPAMSYVS) the chain is Extracellular. Residues 385–405 (IVAIFGFVAFFEIGPGPIPWF) form a helical membrane-spanning segment. Residues Glu-396 and Trp-404 each contribute to the D-glucose site. Over 406 to 417 (IVAELFSQGPRP) the chain is Cytoplasmic. A helical transmembrane segment spans residues 418-438 (AAMAVAGFSNWTSNFIIGMGF). Topologically, residues 439-445 (QYVAEAM) are extracellular. Residues 446–466 (GPYVFLLFAVLLLGFFIFTFL) form a helical membrane-spanning segment. At 467–509 (RVPETRGRTFDQISAAFHRTPSLLEQEVKPSTELEYLGPDEND) the chain is on the cytoplasmic side. Residue Thr-486 is modified to Phosphothreonine. Ser-488 is subject to Phosphoserine. Positions 489 to 490 (LL) match the Dileucine internalization motif motif.

This sequence belongs to the major facilitator superfamily. Sugar transporter (TC 2.A.1.1) family. Glucose transporter subfamily. As to quaternary structure, interacts with NDUFA9. Binds to DAXX. Interacts via its N-terminus with SRFBP1. Interacts with TRARG1; the interaction is required for proper SLC2A4 recycling after insulin stimulation. Sumoylated. Post-translationally, palmitoylated. Palmitoylation by ZDHHC7 controls the insulin-dependent translocation of GLUT4 to the plasma membrane. In terms of tissue distribution, skeletal and cardiac muscles; brown and white fat.

The protein resides in the cell membrane. It is found in the endomembrane system. The protein localises to the cytoplasm. It localises to the perinuclear region. The enzyme catalyses D-glucose(out) = D-glucose(in). Insulin-regulated facilitative glucose transporter, which plays a key role in removal of glucose from circulation. Response to insulin is regulated by its intracellular localization: in the absence of insulin, it is efficiently retained intracellularly within storage compartments in muscle and fat cells. Upon insulin stimulation, translocates from these compartments to the cell surface where it transports glucose from the extracellular milieu into the cell. In Homo sapiens (Human), this protein is Solute carrier family 2, facilitated glucose transporter member 4.